Reading from the N-terminus, the 68-residue chain is Coiled-coil domain-containing protein 179 (68 aa).

Positions 11-68 (SQVNPEGPRQHHPSEVTERQLANKRIQNMQHLKKEKRRLNKRFSRPSPIPEPGLLWSS) are disordered. Over residues 18–28 (PRQHHPSEVTE) the composition is skewed to basic and acidic residues. Residues 27–53 (TERQLANKRIQNMQHLKKEKRRLNKRF) are a coiled coil. Basic residues predominate over residues 41–54 (HLKKEKRRLNKRFS).

The chain is Coiled-coil domain-containing protein 179 (CCDC179) from Homo sapiens (Human).